The following is a 308-amino-acid chain: Transaldolase (308 aa).

Catalysis depends on lysine 125, which acts as the Schiff-base intermediate with substrate.

This sequence belongs to the transaldolase family. Type 1 subfamily. Homodimer.

It is found in the cytoplasm. The catalysed reaction is D-sedoheptulose 7-phosphate + D-glyceraldehyde 3-phosphate = D-erythrose 4-phosphate + beta-D-fructose 6-phosphate. The protein operates within carbohydrate degradation; pentose phosphate pathway; D-glyceraldehyde 3-phosphate and beta-D-fructose 6-phosphate from D-ribose 5-phosphate and D-xylulose 5-phosphate (non-oxidative stage): step 2/3. Its function is as follows. Transaldolase is important for the balance of metabolites in the pentose-phosphate pathway. The sequence is that of Transaldolase from Pseudomonas fluorescens (strain ATCC BAA-477 / NRRL B-23932 / Pf-5).